A 500-amino-acid chain; its full sequence is L-arabinose isomerase (500 aa).

The Mn(2+) site is built by E306, E333, H350, and H450.

Belongs to the arabinose isomerase family. Homohexamer. Mn(2+) is required as a cofactor.

It catalyses the reaction beta-L-arabinopyranose = L-ribulose. It functions in the pathway carbohydrate degradation; L-arabinose degradation via L-ribulose; D-xylulose 5-phosphate from L-arabinose (bacterial route): step 1/3. Functionally, catalyzes the conversion of L-arabinose to L-ribulose. The sequence is that of L-arabinose isomerase from Yersinia enterocolitica serotype O:8 / biotype 1B (strain NCTC 13174 / 8081).